The sequence spans 335 residues: Nucleoid-associated protein YejK (335 aa).

This sequence belongs to the YejK family.

The protein localises to the cytoplasm. It is found in the nucleoid. This Shigella flexneri protein is Nucleoid-associated protein YejK.